Here is a 514-residue protein sequence, read N- to C-terminus: Activin receptor type-2A (514 aa).

Positions 1–20 are cleaved as a signal peptide; it reads MGAATKLAFAVFLISCSSAG. At 21–136 the chain is on the extracellular side; the sequence is SILGRSETKE…TSNPVTTKPP (116 aa). Cystine bridges form between Cys31/Cys61, Cys51/Cys79, Cys86/Cys105, Cys92/Cys104, and Cys106/Cys111. Asn46, Asn67, and Asn88 each carry an N-linked (GlcNAc...) asparagine glycan. A helical membrane pass occupies residues 137–162; sequence LFNTLLYSLVPIMVVAVIVLFSFWMY. Residues 163–514 are Cytoplasmic-facing; the sequence is RHHKLAYPPV…VDFPPKESSL (352 aa). The Protein kinase domain maps to 193-486; sequence LQLLEVKARG…EERIIQMQKL (294 aa). ATP-binding positions include 199–207 and Lys220; that span reads KARGRFGCV. Asp323 functions as the Proton acceptor in the catalytic mechanism.

The protein belongs to the protein kinase superfamily. TKL Ser/Thr protein kinase family. TGFB receptor subfamily.

It localises to the cell membrane. The catalysed reaction is L-threonyl-[receptor-protein] + ATP = O-phospho-L-threonyl-[receptor-protein] + ADP + H(+). It carries out the reaction L-seryl-[receptor-protein] + ATP = O-phospho-L-seryl-[receptor-protein] + ADP + H(+). Functionally, receptor for activin A, activin B and inhibin A. Involved in transmembrane signaling. In Xenopus laevis (African clawed frog), this protein is Activin receptor type-2A (acvr2a).